A 126-amino-acid polypeptide reads, in one-letter code: UPF0292 protein TSIB_0423 (126 aa).

The Toprim domain occupies 20–100 (NGVILVEGMR…RVDTNTRREL (81 aa)). Residues Glu-26, Asp-69, and Asp-71 each contribute to the Mg(2+) site.

It belongs to the UPF0292 family. It depends on Mg(2+) as a cofactor.

This Thermococcus sibiricus (strain DSM 12597 / MM 739) protein is UPF0292 protein TSIB_0423.